The following is a 993-amino-acid chain: Replication protein 1a (993 aa).

The methyltransferase stretch occupies residues 50–408 (RNALDVKDSE…TIVINGMAMQ (359 aa)). Residues 72-289 (HLTQQEQAPH…HKWENVKSFL (218 aa)) form the Alphavirus-like MT domain. The segment at 525–581 (AEDRKQKAEAASQIPVDEIPDDTAESSDDTPREADTNQKSEPSSPELETLSTQTRSP) is disordered. Over residues 542–552 (EIPDDTAESSD) the composition is skewed to acidic residues. The span at 553–562 (DTPREADTNQ) shows a compositional bias: basic and acidic residues. Over residues 564–576 (SEPSSPELETLST) the composition is skewed to low complexity. The (+)RNA virus helicase ATP-binding domain maps to 682 to 838 (IVNADCVISN…TIIPDETDTA (157 aa)). The segment at 711–975 (LVDGVAGCGK…VTRHKKTFRY (265 aa)) is ATP-dependent helicase. 714-721 (GVAGCGKT) contributes to the ATP binding site. The (+)RNA virus helicase C-terminal domain maps to 839-993 (DTTFRSPQDV…DLIAECLARV (155 aa)).

This sequence belongs to the bromoviridae replication protein 1a family. As to quaternary structure, interacts with RNA-directed RNA polymerase 2a.

The protein localises to the host endoplasmic reticulum membrane. Involved in the virus replication. Contains a helicase domain and a methyltransferase domain. The methyltransferase domain is probably involved in viral RNA capping. Involved in the formation of ER membrane spherular invaginations in which RNA replication complexes form. This is Replication protein 1a from Canna (Florist's daisy).